We begin with the raw amino-acid sequence, 158 residues long: NAD(P)H-quinone oxidoreductase subunit J, chloroplastic (158 aa).

The protein belongs to the complex I 30 kDa subunit family. NDH is composed of at least 16 different subunits, 5 of which are encoded in the nucleus.

The protein resides in the plastid. It localises to the chloroplast thylakoid membrane. The catalysed reaction is a plastoquinone + NADH + (n+1) H(+)(in) = a plastoquinol + NAD(+) + n H(+)(out). It catalyses the reaction a plastoquinone + NADPH + (n+1) H(+)(in) = a plastoquinol + NADP(+) + n H(+)(out). In terms of biological role, NDH shuttles electrons from NAD(P)H:plastoquinone, via FMN and iron-sulfur (Fe-S) centers, to quinones in the photosynthetic chain and possibly in a chloroplast respiratory chain. The immediate electron acceptor for the enzyme in this species is believed to be plastoquinone. Couples the redox reaction to proton translocation, and thus conserves the redox energy in a proton gradient. The sequence is that of NAD(P)H-quinone oxidoreductase subunit J, chloroplastic from Fagopyrum esculentum subsp. ancestrale (Wild buckwheat).